A 294-amino-acid chain; its full sequence is 4-hydroxy-tetrahydrodipicolinate synthase (294 aa).

A pyruvate-binding site is contributed by threonine 47. Tyrosine 135 functions as the Proton donor/acceptor in the catalytic mechanism. Residue lysine 163 is the Schiff-base intermediate with substrate of the active site. Residue isoleucine 205 participates in pyruvate binding.

This sequence belongs to the DapA family. In terms of assembly, homotetramer; dimer of dimers.

The protein resides in the cytoplasm. It catalyses the reaction L-aspartate 4-semialdehyde + pyruvate = (2S,4S)-4-hydroxy-2,3,4,5-tetrahydrodipicolinate + H2O + H(+). It functions in the pathway amino-acid biosynthesis; L-lysine biosynthesis via DAP pathway; (S)-tetrahydrodipicolinate from L-aspartate: step 3/4. In terms of biological role, catalyzes the condensation of (S)-aspartate-beta-semialdehyde [(S)-ASA] and pyruvate to 4-hydroxy-tetrahydrodipicolinate (HTPA). The sequence is that of 4-hydroxy-tetrahydrodipicolinate synthase from Rickettsia typhi (strain ATCC VR-144 / Wilmington).